The chain runs to 365 residues: Fructose-1,6-bisphosphatase class 1 2 (365 aa).

Mg(2+)-binding residues include Glu100, Asp122, Leu124, and Asp125. Residues 125–128 and Asn221 each bind substrate; that span reads DGSS. Residue Glu293 coordinates Mg(2+).

It belongs to the FBPase class 1 family. In terms of assembly, homotetramer. Mg(2+) is required as a cofactor.

The protein localises to the cytoplasm. It catalyses the reaction beta-D-fructose 1,6-bisphosphate + H2O = beta-D-fructose 6-phosphate + phosphate. It participates in carbohydrate biosynthesis; gluconeogenesis. This Leptothrix cholodnii (strain ATCC 51168 / LMG 8142 / SP-6) (Leptothrix discophora (strain SP-6)) protein is Fructose-1,6-bisphosphatase class 1 2.